Here is a 107-residue protein sequence, read N- to C-terminus: Nucleoid-associated protein AZOSEA06390 (107 aa).

Belongs to the YbaB/EbfC family. In terms of assembly, homodimer.

Its subcellular location is the cytoplasm. It localises to the nucleoid. Its function is as follows. Binds to DNA and alters its conformation. May be involved in regulation of gene expression, nucleoid organization and DNA protection. The protein is Nucleoid-associated protein AZOSEA06390 of Aromatoleum aromaticum (strain DSM 19018 / LMG 30748 / EbN1) (Azoarcus sp. (strain EbN1)).